We begin with the raw amino-acid sequence, 235 residues long: Uridylate kinase (235 aa).

ATP is bound at residue Lys-9–Gly-12. Gly-50 lines the UMP pocket. Residues Gly-51 and Arg-55 each contribute to the ATP site. Residues Asp-70 and Thr-131–Thr-138 each bind UMP. Residues Asn-159, Tyr-165, and Asp-168 each coordinate ATP.

Belongs to the UMP kinase family. As to quaternary structure, homohexamer; trimer of dimers.

Its subcellular location is the cytoplasm. The enzyme catalyses UMP + ATP = UDP + ADP. It participates in pyrimidine metabolism; CTP biosynthesis via de novo pathway; UDP from UMP (UMPK route): step 1/1. Its activity is regulated as follows. Unlike other bacteria, is not activated by GTP. UTP is a competitive inhibitor against UMP and a non-competitive inhibitor toward ATP. In terms of biological role, catalyzes the reversible phosphorylation of UMP to UDP, with ATP as the most efficient phosphate donor. Is also able to phosphorylate dUMP. In Ureaplasma parvum serovar 3 (strain ATCC 700970), this protein is Uridylate kinase (pyrH).